We begin with the raw amino-acid sequence, 171 residues long: UPF0763 protein HPP12_0677 (171 aa).

Belongs to the UPF0763 family.

The chain is UPF0763 protein HPP12_0677 from Helicobacter pylori (strain P12).